The following is a 335-amino-acid chain: MSWPTFWYQTPKQSWKTALLWPVGKLVCWVAARRLKRFKKKGPSKITAAQVVVIGNIVVGGSGKTPFIQWLGRQLSEHGLTFGVVSRGYGGQSKVWPQWVTEHSEPTMVGDEPVLLAQSLHCPVAVSPNRADAIALLESKYDLDVIISDDGLQHYKMARDIEIVMMDSERLLGNEYCLPAGPLRESKRRLGLVDFVVWNGGDASDLASETSTIMKLVPQHFRSVANPKMILPISSFKHEKTNAMAGIGNPQRFFNTLSELGIDADVTPFADHKAFQSSDFDTFESTKPLLMTEKDAVKCRAFAQPNWWYLEVQPLCPATFAHQLFHKLGHYDFTI.

ATP is bound at residue 58–65; that stretch reads VVGGSGKT.

This sequence belongs to the LpxK family.

It carries out the reaction a lipid A disaccharide + ATP = a lipid IVA + ADP + H(+). It functions in the pathway glycolipid biosynthesis; lipid IV(A) biosynthesis; lipid IV(A) from (3R)-3-hydroxytetradecanoyl-[acyl-carrier-protein] and UDP-N-acetyl-alpha-D-glucosamine: step 6/6. Its function is as follows. Transfers the gamma-phosphate of ATP to the 4'-position of a tetraacyldisaccharide 1-phosphate intermediate (termed DS-1-P) to form tetraacyldisaccharide 1,4'-bis-phosphate (lipid IVA). The chain is Tetraacyldisaccharide 4'-kinase from Hydrogenovibrio crunogenus (strain DSM 25203 / XCL-2) (Thiomicrospira crunogena).